A 65-amino-acid polypeptide reads, in one-letter code: Large ribosomal subunit protein bL35 (65 aa).

This sequence belongs to the bacterial ribosomal protein bL35 family.

In Wolbachia sp. subsp. Brugia malayi (strain TRS), this protein is Large ribosomal subunit protein bL35.